Reading from the N-terminus, the 248-residue chain is 1-(5-phosphoribosyl)-5-[(5-phosphoribosylamino)methylideneamino] imidazole-4-carboxamide isomerase (248 aa).

The active-site Proton acceptor is Asp-8. The active-site Proton donor is Asp-129.

This sequence belongs to the HisA/HisF family.

It localises to the cytoplasm. It catalyses the reaction 1-(5-phospho-beta-D-ribosyl)-5-[(5-phospho-beta-D-ribosylamino)methylideneamino]imidazole-4-carboxamide = 5-[(5-phospho-1-deoxy-D-ribulos-1-ylimino)methylamino]-1-(5-phospho-beta-D-ribosyl)imidazole-4-carboxamide. It functions in the pathway amino-acid biosynthesis; L-histidine biosynthesis; L-histidine from 5-phospho-alpha-D-ribose 1-diphosphate: step 4/9. This chain is 1-(5-phosphoribosyl)-5-[(5-phosphoribosylamino)methylideneamino] imidazole-4-carboxamide isomerase, found in Sinorhizobium medicae (strain WSM419) (Ensifer medicae).